The chain runs to 70 residues: Small integral membrane protein 42 (70 aa).

A helical transmembrane segment spans residues 26–46 (LVNVLFFFTPLMTLVTLLILV).

The protein localises to the membrane. The polypeptide is Small integral membrane protein 42 (Homo sapiens (Human)).